We begin with the raw amino-acid sequence, 314 residues long: Acetaldehyde dehydrogenase (314 aa).

14–17 (SGNI) is a binding site for NAD(+). Cysteine 132 (acyl-thioester intermediate) is an active-site residue. NAD(+) contacts are provided by residues 163-171 (SAGPGTRAN) and asparagine 291.

Belongs to the acetaldehyde dehydrogenase family.

It carries out the reaction acetaldehyde + NAD(+) + CoA = acetyl-CoA + NADH + H(+). In Polaromonas sp. (strain JS666 / ATCC BAA-500), this protein is Acetaldehyde dehydrogenase.